Here is a 356-residue protein sequence, read N- to C-terminus: Probable neutral protease 2 homolog ARB_04769 (356 aa).

Positions 1-17 (MQFTALLAALGAPLALA) are cleaved as a signal peptide. The propeptide occupies 18-183 (ASIPAAAHNH…DDSTGVIDKR (166 aa)). Cystine bridges form between cysteine 191-cysteine 262 and cysteine 269-cysteine 287. An N-linked (GlcNAc...) asparagine glycan is attached at asparagine 205. Histidine 311 serves as a coordination point for Zn(2+). Residue glutamate 312 is part of the active site. Positions 315 and 326 each coordinate Zn(2+).

Belongs to the peptidase M35 family. It depends on Zn(2+) as a cofactor.

It localises to the secreted. The catalysed reaction is Preferential cleavage of bonds with hydrophobic residues in P1'. Also 3-Asn-|-Gln-4 and 8-Gly-|-Ser-9 bonds in insulin B chain.. Probable secreted metalloprotease that shows high activities on basic nuclear substrates such as histone and protamine. May be involved in virulence. The sequence is that of Probable neutral protease 2 homolog ARB_04769 from Arthroderma benhamiae (strain ATCC MYA-4681 / CBS 112371) (Trichophyton mentagrophytes).